A 193-amino-acid polypeptide reads, in one-letter code: Pyridoxal 5'-phosphate synthase subunit PdxT (193 aa).

G48–S50 contributes to the L-glutamine binding site. C80 (nucleophile) is an active-site residue. L-glutamine-binding positions include R107 and I136 to R137. Active-site charge relay system residues include H172 and E174.

It belongs to the glutaminase PdxT/SNO family. In the presence of PdxS, forms a dodecamer of heterodimers. Only shows activity in the heterodimer.

It carries out the reaction aldehydo-D-ribose 5-phosphate + D-glyceraldehyde 3-phosphate + L-glutamine = pyridoxal 5'-phosphate + L-glutamate + phosphate + 3 H2O + H(+). It catalyses the reaction L-glutamine + H2O = L-glutamate + NH4(+). It participates in cofactor biosynthesis; pyridoxal 5'-phosphate biosynthesis. In terms of biological role, catalyzes the hydrolysis of glutamine to glutamate and ammonia as part of the biosynthesis of pyridoxal 5'-phosphate. The resulting ammonia molecule is channeled to the active site of PdxS. In Clostridium botulinum (strain Loch Maree / Type A3), this protein is Pyridoxal 5'-phosphate synthase subunit PdxT.